The primary structure comprises 106 residues: MKKKTKIILSLLAALIVILIVLPVLSPVVFTASSEKGAIRHEIYKRGYPYQSYFAVLQKREGDNESGNLYYVNWLDWKDETGQTPHLCYSKKSSDGEYEVSCGTGP.

Positions 1 to 31 are cleaved as a signal peptide; sequence MKKKTKIILSLLAALIVILIVLPVLSPVVFT.

This is an uncharacterized protein from Bacillus subtilis (strain 168).